We begin with the raw amino-acid sequence, 137 residues long: Large ribosomal subunit protein uL16c (137 aa).

Belongs to the universal ribosomal protein uL16 family. As to quaternary structure, part of the 50S ribosomal subunit.

It localises to the plastid. The protein is Large ribosomal subunit protein uL16c of Aneura mirabilis (Parasitic liverwort).